The primary structure comprises 137 residues: Nucleoside diphosphate kinase (137 aa).

Positions 9, 57, 85, 91, 102, and 112 each coordinate ATP. Residue H115 is the Pros-phosphohistidine intermediate of the active site.

This sequence belongs to the NDK family. In terms of assembly, homotetramer. Mg(2+) is required as a cofactor.

It localises to the cytoplasm. It carries out the reaction a 2'-deoxyribonucleoside 5'-diphosphate + ATP = a 2'-deoxyribonucleoside 5'-triphosphate + ADP. It catalyses the reaction a ribonucleoside 5'-diphosphate + ATP = a ribonucleoside 5'-triphosphate + ADP. Its function is as follows. Major role in the synthesis of nucleoside triphosphates other than ATP. The ATP gamma phosphate is transferred to the NDP beta phosphate via a ping-pong mechanism, using a phosphorylated active-site intermediate. The polypeptide is Nucleoside diphosphate kinase (Thermus thermophilus (strain ATCC 27634 / DSM 579 / HB8)).